A 398-amino-acid chain; its full sequence is MEIIQTTEAFKALVQDIKTSINGYKEPLAFGVCRVDMGQLNLEKTLQATYPVINWNENFGSAAIFIKALQEQGVEIDFTQSEVICNINKAFLKSCLNAFSPYSEEAYGDAHKNIQVISALYNQIATSGSKDGEFKVTFIFADEPLKSVEATYLKLYALSQAKVEIRSINLNGAFGALPNVAWSNGKPLELDYLREFEIELKLANEYPHIEFVDKFPRFLQHIIPADNTRILDTSKVRFGAQLAAGTTVMPGASYVNFNAGTTGAVMVEGRISSSAVVGAGSDIGGGASILGVLSGTDGNPITIGKNTLLGANSTCGIPLGDGCIIDGGLAVFAGTKFHINDAELIELKKVNPNTKFDNYMKGWELAGLHGLHFRQNSLNGQYVVQRSTREIKLNTDLH.

Glutamate 268 acts as the Acyl-anhydride intermediate in catalysis. Succinyl-CoA-binding positions include arginine 270, glycine 285, serine 288, alanine 311, 326-327 (DG), glycine 334, lysine 361, and 374-377 (RQNS).

The protein belongs to the type 2 tetrahydrodipicolinate N-succinyltransferase family. In terms of assembly, homotrimer.

It is found in the cytoplasm. It catalyses the reaction (S)-2,3,4,5-tetrahydrodipicolinate + succinyl-CoA + H2O = (S)-2-succinylamino-6-oxoheptanedioate + CoA. Its pathway is amino-acid biosynthesis; L-lysine biosynthesis via DAP pathway; LL-2,6-diaminopimelate from (S)-tetrahydrodipicolinate (succinylase route): step 1/3. Its function is as follows. Catalyzes the conversion of the cyclic tetrahydrodipicolinate (THDP) into the acyclic N-succinyl-L-2-amino-6-oxopimelate using succinyl-CoA. This chain is 2,3,4,5-tetrahydropyridine-2,6-dicarboxylate N-succinyltransferase, found in Sulfurimonas denitrificans (strain ATCC 33889 / DSM 1251) (Thiomicrospira denitrificans (strain ATCC 33889 / DSM 1251)).